The chain runs to 297 residues: Mycothiol acetyltransferase (297 aa).

Glu35 lines the 1D-myo-inositol 2-(L-cysteinylamino)-2-deoxy-alpha-D-glucopyranoside pocket. 73–75 lines the acetyl-CoA pocket; that stretch reads MLV. Residues 155 to 297 form the N-acetyltransferase domain; that stretch reads LRTFGGTEAE…VAVHAQYGIP (143 aa). 1D-myo-inositol 2-(L-cysteinylamino)-2-deoxy-alpha-D-glucopyranoside is bound by residues Glu181, Lys222, and Glu230. Residues 234-236 and 241-247 contribute to the acetyl-CoA site; these read LGV and QGRGLGR. 1D-myo-inositol 2-(L-cysteinylamino)-2-deoxy-alpha-D-glucopyranoside is bound at residue Tyr268.

It belongs to the acetyltransferase family. MshD subfamily. In terms of assembly, monomer.

It carries out the reaction 1D-myo-inositol 2-(L-cysteinylamino)-2-deoxy-alpha-D-glucopyranoside + acetyl-CoA = mycothiol + CoA + H(+). Its function is as follows. Catalyzes the transfer of acetyl from acetyl-CoA to desacetylmycothiol (Cys-GlcN-Ins) to form mycothiol. This Beutenbergia cavernae (strain ATCC BAA-8 / DSM 12333 / CCUG 43141 / JCM 11478 / NBRC 16432 / NCIMB 13614 / HKI 0122) protein is Mycothiol acetyltransferase.